Here is a 395-residue protein sequence, read N- to C-terminus: S-adenosylmethionine synthase (395 aa).

ATP is bound at residue histidine 12. Residue aspartate 14 coordinates Mg(2+). Glutamate 40 contributes to the K(+) binding site. Residues glutamate 53 and glutamine 96 each coordinate L-methionine. Residues 96-106 (QSKEIADAVNF) form a flexible loop region. Residues 174–176 (DGK), 242–243 (RF), aspartate 251, 257–258 (RK), alanine 274, and lysine 278 each bind ATP. Aspartate 251 serves as a coordination point for L-methionine. Residue lysine 282 participates in L-methionine binding.

Belongs to the AdoMet synthase family. As to quaternary structure, homotetramer; dimer of dimers. The cofactor is Mg(2+). K(+) serves as cofactor.

It is found in the cytoplasm. It carries out the reaction L-methionine + ATP + H2O = S-adenosyl-L-methionine + phosphate + diphosphate. The protein operates within amino-acid biosynthesis; S-adenosyl-L-methionine biosynthesis; S-adenosyl-L-methionine from L-methionine: step 1/1. Its function is as follows. Catalyzes the formation of S-adenosylmethionine (AdoMet) from methionine and ATP. The overall synthetic reaction is composed of two sequential steps, AdoMet formation and the subsequent tripolyphosphate hydrolysis which occurs prior to release of AdoMet from the enzyme. The chain is S-adenosylmethionine synthase from Tropheryma whipplei (strain Twist) (Whipple's bacillus).